Consider the following 154-residue polypeptide: CASP-like protein 5B2 (154 aa).

The Cytoplasmic portion of the chain corresponds to 1–10 (MKKLLGGPGT). Residues 11–31 (VCGLLLRIGQCASAAASIGVM) form a helical membrane-spanning segment. Over 32-42 (VSAKEFSVHTA) the chain is Extracellular. The helical transmembrane segment at 43-63 (FCYLIASMGLQLLWSFGLACL) threads the bilayer. At 64 to 77 (DVYALRGKKDLQNP) the chain is on the cytoplasmic side. A helical membrane pass occupies residues 78-98 (ILVSLFVVGDWVTAMLSLAAA). At 99–129 (CSSAGVVVLYEKDIKYCNTQSQYPCLRYEVA) the chain is on the extracellular side. Residues 130-150 (VALSFVTWIQIAVSSHVTFWI) form a helical membrane-spanning segment. Residues 151 to 154 (LASV) are Cytoplasmic-facing.

This sequence belongs to the Casparian strip membrane proteins (CASP) family. In terms of assembly, homodimer and heterodimers. As to expression, expressed in the stele of the root.

It localises to the cell membrane. The sequence is that of CASP-like protein 5B2 from Arabidopsis thaliana (Mouse-ear cress).